The following is a 281-amino-acid chain: GPN-loop GTPase 3 (281 aa).

Position 13-18 (13-18) interacts with GTP; that stretch reads GSGKST. Residues 70–72 carry the Gly-Pro-Asn (GPN)-loop; involved in dimer interface motif; it reads GPN. Position 173-176 (173-176) interacts with GTP; the sequence is SKMD. The disordered stretch occupies residues 259-281; that stretch reads VQYGEDEEPKEPKDMDEGDFTAQ.

Belongs to the GPN-loop GTPase family. Heterodimers with GPN1 or GPN2. Binds to RNA polymerase II (RNAPII).

Functionally, small GTPase required for proper nuclear import of RNA polymerase II and III (RNAPII and RNAPIII). May act at an RNAP assembly step prior to nuclear import. The chain is GPN-loop GTPase 3 from Mycosarcoma maydis (Corn smut fungus).